A 322-amino-acid polypeptide reads, in one-letter code: uncharacterized protein (322 aa).

Disordered stretches follow at residues 1–51 and 107–130; these read MARS…GAWA and QERQ…DRPD. Over residues 119-130 the composition is skewed to basic and acidic residues; that stretch reads LHLEPGNEDRPD.

In terms of tissue distribution, expressed in skin and fetal lung.

This is an uncharacterized protein from Homo sapiens (Human).